The following is a 928-amino-acid chain: Nuclear pore complex-interacting protein family member B12 (928 aa).

Residues 73–93 traverse the membrane as a helical segment; that stretch reads VVITLWIVYLWVSLLKTIFWS. Disordered regions lie at residues 242 to 452 and 663 to 928; these read RMGH…NIKT and ERLR…RRLS. Polar residues predominate over residues 252 to 263; the sequence is QQHSITDNSLSL. Residues 349–359 are compositionally biased toward pro residues; it reads PLPPSAPPSAP. Composition is skewed to basic and acidic residues over residues 406–416, 698–708, 740–750, and 782–792; these read DNIKTPAERLR.

The protein belongs to the NPIP family.

Its subcellular location is the membrane. The protein is Nuclear pore complex-interacting protein family member B12 of Homo sapiens (Human).